We begin with the raw amino-acid sequence, 126 residues long: Glycine cleavage system H protein (126 aa).

In terms of domain architecture, Lipoyl-binding spans 22–104 (IATVGITAFA…YGRGWLFKVE (83 aa)). The residue at position 63 (lysine 63) is an N6-lipoyllysine.

The protein belongs to the GcvH family. As to quaternary structure, the glycine cleavage system is composed of four proteins: P, T, L and H. The cofactor is (R)-lipoate.

Its function is as follows. The glycine cleavage system catalyzes the degradation of glycine. The H protein shuttles the methylamine group of glycine from the P protein to the T protein. The protein is Glycine cleavage system H protein of Thermobifida fusca (strain YX).